A 541-amino-acid polypeptide reads, in one-letter code: Probable inorganic phosphate transporter 1-8 (541 aa).

At methionine 1 to alanine 28 the chain is on the cytoplasmic side. Residues isoleucine 29–valine 49 form a helical membrane-spanning segment. Over threonine 50 to alanine 74 the chain is Extracellular. The helical transmembrane segment at alanine 75–leucine 95 threads the bilayer. Residues glycine 96–lysine 102 lie on the Cytoplasmic side of the membrane. A helical transmembrane segment spans residues serine 103–phenylalanine 123. The Extracellular portion of the chain corresponds to serine 124–threonine 126. The chain crosses the membrane as a helical span at residues proline 127–glycine 147. At aspartate 148–phenylalanine 168 the chain is on the cytoplasmic side. The helical transmembrane segment at isoleucine 169 to isoleucine 189 threads the bilayer. Topologically, residues isoleucine 190–alanine 215 are extracellular. Residues aspartate 216–tryptophan 236 form a helical membrane-spanning segment. At arginine 237–arginine 297 the chain is on the cytoplasmic side. A helical transmembrane segment spans residues histidine 298–serine 318. The Extracellular portion of the chain corresponds to glutamine 319–threonine 353. A helical transmembrane segment spans residues leucine 354–valine 374. At glycine 375 to arginine 376 the chain is on the cytoplasmic side. A helical membrane pass occupies residues phenylalanine 377–proline 397. Topologically, residues tyrosine 398–lysine 404 are extracellular. A helical membrane pass occupies residues glycine 405–proline 425. At asparagine 426–glycine 447 the chain is on the cytoplasmic side. Residues isoleucine 448–alanine 468 form a helical membrane-spanning segment. Residues glutamine 469–asparagine 486 are Extracellular-facing. A helical transmembrane segment spans residues serine 487 to glutamate 507. Topologically, residues serine 508–alanine 541 are cytoplasmic. Residues glutamate 514 to alanine 541 are disordered. The segment covering methionine 516–valine 527 has biased composition (acidic residues).

The protein belongs to the major facilitator superfamily. Phosphate:H(+) symporter (TC 2.A.1.9) family.

Its subcellular location is the membrane. Its function is as follows. High-affinity transporter for external inorganic phosphate. The chain is Probable inorganic phosphate transporter 1-8 (PHT1-8) from Oryza sativa subsp. japonica (Rice).